Reading from the N-terminus, the 240-residue chain is UDP-2,3-diacylglucosamine hydrolase (240 aa).

Residues Asp-8, His-10, Asp-41, Asn-79, and His-114 each contribute to the Mn(2+) site. 79-80 (NR) contacts substrate. Substrate-binding residues include Asp-122, Ser-160, Asn-164, Lys-167, and His-195. His-195 and His-197 together coordinate Mn(2+).

It belongs to the LpxH family. The cofactor is Mn(2+).

The protein resides in the cell inner membrane. It catalyses the reaction UDP-2-N,3-O-bis[(3R)-3-hydroxytetradecanoyl]-alpha-D-glucosamine + H2O = 2-N,3-O-bis[(3R)-3-hydroxytetradecanoyl]-alpha-D-glucosaminyl 1-phosphate + UMP + 2 H(+). It functions in the pathway glycolipid biosynthesis; lipid IV(A) biosynthesis; lipid IV(A) from (3R)-3-hydroxytetradecanoyl-[acyl-carrier-protein] and UDP-N-acetyl-alpha-D-glucosamine: step 4/6. Functionally, hydrolyzes the pyrophosphate bond of UDP-2,3-diacylglucosamine to yield 2,3-diacylglucosamine 1-phosphate (lipid X) and UMP by catalyzing the attack of water at the alpha-P atom. Involved in the biosynthesis of lipid A, a phosphorylated glycolipid that anchors the lipopolysaccharide to the outer membrane of the cell. The polypeptide is UDP-2,3-diacylglucosamine hydrolase (Escherichia coli O157:H7).